The chain runs to 263 residues: Receptor-transporting protein 1 (263 aa).

The Cytoplasmic segment spans residues methionine 1–serine 238. The segment at alanine 88–glycine 197 adopts a 3CxxC-type zinc-finger fold. A helical transmembrane segment spans residues isoleucine 239–phenylalanine 259. Residues arginine 260 to valine 263 lie on the Extracellular side of the membrane.

The protein belongs to the TMEM7 family. Interacts with olfactory receptors. Expressed in testis.

It is found in the cell membrane. Functionally, specifically promotes functional cell surface expression of olfactory receptors, but not of other GPCRs. This is Receptor-transporting protein 1 (RTP1) from Homo sapiens (Human).